A 539-amino-acid polypeptide reads, in one-letter code: Membrane protein insertase YidC (539 aa).

The helical transmembrane segment at 7–27 threads the bilayer; it reads IIAIALSFVVLVGWSYLADHM. A disordered region spans residues 32–64; sequence QPAPQAQQEETAPSASQAAPQSASQAAAPAPRA. The next 3 membrane-spanning stretches (helical) occupy residues 347–367, 418–438, and 498–518; these read YVGN…LVFW, GGCL…QALL, and IMMF…SGLV.

This sequence belongs to the OXA1/ALB3/YidC family. Type 1 subfamily. In terms of assembly, interacts with the Sec translocase complex via SecD. Specifically interacts with transmembrane segments of nascent integral membrane proteins during membrane integration.

The protein resides in the cell inner membrane. Its function is as follows. Required for the insertion and/or proper folding and/or complex formation of integral membrane proteins into the membrane. Involved in integration of membrane proteins that insert both dependently and independently of the Sec translocase complex, as well as at least some lipoproteins. Aids folding of multispanning membrane proteins. This chain is Membrane protein insertase YidC, found in Nitratidesulfovibrio vulgaris (strain DSM 19637 / Miyazaki F) (Desulfovibrio vulgaris).